Consider the following 484-residue polypeptide: tRNA sulfurtransferase (484 aa).

One can recognise a THUMP domain in the interval 56 to 158 (NCLKKALSKV…GNRAYFYTEV (103 aa)). Residues 176–177 (LV), K257, G279, and Q288 contribute to the ATP site. An intrachain disulfide couples C336 to C444. Residues 396–479 (APEGAVIVDL…TRNAVPPSSQ (84 aa)) form the Rhodanese domain. Residue C444 is the Cysteine persulfide intermediate of the active site.

The protein belongs to the ThiI family.

It localises to the cytoplasm. It catalyses the reaction [ThiI sulfur-carrier protein]-S-sulfanyl-L-cysteine + a uridine in tRNA + 2 reduced [2Fe-2S]-[ferredoxin] + ATP + H(+) = [ThiI sulfur-carrier protein]-L-cysteine + a 4-thiouridine in tRNA + 2 oxidized [2Fe-2S]-[ferredoxin] + AMP + diphosphate. The catalysed reaction is [ThiS sulfur-carrier protein]-C-terminal Gly-Gly-AMP + S-sulfanyl-L-cysteinyl-[cysteine desulfurase] + AH2 = [ThiS sulfur-carrier protein]-C-terminal-Gly-aminoethanethioate + L-cysteinyl-[cysteine desulfurase] + A + AMP + 2 H(+). The protein operates within cofactor biosynthesis; thiamine diphosphate biosynthesis. Its function is as follows. Catalyzes the ATP-dependent transfer of a sulfur to tRNA to produce 4-thiouridine in position 8 of tRNAs, which functions as a near-UV photosensor. Also catalyzes the transfer of sulfur to the sulfur carrier protein ThiS, forming ThiS-thiocarboxylate. This is a step in the synthesis of thiazole, in the thiamine biosynthesis pathway. The sulfur is donated as persulfide by IscS. The sequence is that of tRNA sulfurtransferase from Pyrobaculum aerophilum (strain ATCC 51768 / DSM 7523 / JCM 9630 / CIP 104966 / NBRC 100827 / IM2).